The chain runs to 105 residues: MALPQLTDEQRAAALEKAAAARRARAELKDRLKRGGTNLKQVLTDAETDEVLGKMKVSALLEALPKVGKVKAQEIMTELEIAPTRRLRGLGDRQRKALLEKFDQS.

The H2TH motif, binds DNA motif lies at 64 to 71 (LPKVGKVK). A lid, binds DNA region spans residues 82–94 (APTRRLRGLGDRQ).

It belongs to the actinobacterial IHF (aIHF) family. Binds DNA as a monomer. In terms of assembly, (Microbial infection) Forms a complex with L5 Int and attP DNA. The complex binds attB to form products.

Its subcellular location is the cytoplasm. The protein localises to the nucleoid. In terms of biological role, a nucleoid-associated protein (NAP) that binds DNA without any sequence specificity. Compacts DNA. Binds along the whole chromosome in a dynamic manner, has equal affinity for the oriC site, attB and a randon 62% GC-rich sequence. Plays a role in transcription regulation. Its function is as follows. (Microbial infection) Stimulates temperate Mycobacterium phage L5 Int-mediated recombination in vitro using supercoiled attP (phage attachment site) DNA, linear attB DNA (bacterial attachment site) and L5 integrase (L5 Int or Int-L5, AC P22884). mIHF acts on L5 Int to stimulate formation of a specific intasome complex. mIHF probably stabilizes a sharp bend in the DNA during phage integration. The protein is Integration host factor of Mycolicibacterium smegmatis (strain ATCC 700084 / mc(2)155) (Mycobacterium smegmatis).